A 1007-amino-acid chain; its full sequence is Protocadherin alpha-C2 (1007 aa).

Residues 1–42 form the signal peptide; sequence MEQAGTRPAATEHPRLRRPMPWLLLLPLLLLLLLLLPGPAAS. Cadherin domains are found at residues 43–148, 149–257, 258–365, 374–469, and 470–579; these read QLRY…SPRF, PRPN…SPAF, DQST…APEV, VPEN…PPSF, and LEDS…APHI. Residues 43–708 lie on the Extracellular side of the membrane; that stretch reads QLRYSVPEEQ…RTYSEITLYL (666 aa). Asparagine 280 and asparagine 436 each carry an N-linked (GlcNAc...) asparagine glycan. N-linked (GlcNAc...) asparagine glycosylation is found at asparagine 586 and asparagine 657. Residues 594-691 enclose the Cadherin 6 domain; it reads GPRTAPAGYL…DRVSKILPDT (98 aa). Residues 709–729 form a helical membrane-spanning segment; sequence IIALSTVSFIFLLTIIILSII. Over 730 to 1007 the chain is Cytoplasmic; that stretch reads KCYRYTAYGT…GNSTTDNSDQ (278 aa). PXXP repeat units lie at residues 856 to 859, 889 to 892, 930 to 933, and 948 to 951; these read PRQP, PGGP, PGNP, and PGSP. The interval 856-951 is 4 X 4 AA repeats of P-X-X-P; it reads PRQPNPDWRY…PDKFIIPGSP (96 aa). A disordered region spans residues 885–1007; it reads LRAGPGGPDQ…GNSTTDNSDQ (123 aa). Basic and acidic residues predominate over residues 966 to 980; it reads DKSDFITFGKKEETK.

Its subcellular location is the cell membrane. Functionally, potential calcium-dependent cell-adhesion protein. May be involved in the establishment and maintenance of specific neuronal connections in the brain. This is Protocadherin alpha-C2 (PCDHAC2) from Pan troglodytes (Chimpanzee).